Reading from the N-terminus, the 68-residue chain is Large ribosomal subunit protein uL29 (68 aa).

It belongs to the universal ribosomal protein uL29 family.

This chain is Large ribosomal subunit protein uL29, found in Prochlorococcus marinus (strain SARG / CCMP1375 / SS120).